A 196-amino-acid chain; its full sequence is uncharacterized protein (196 aa).

A helical membrane pass occupies residues 26–46; the sequence is ITFFFILLICFICILLLLAIF.

The protein localises to the membrane. This is an uncharacterized protein from Mus musculus (Mouse).